Here is a 498-residue protein sequence, read N- to C-terminus: GPI mannosyltransferase 4 (498 aa).

A helical membrane pass occupies residues 11-31; the sequence is FYLLTIVFRFVFTLSDSYIHP. The N-linked (GlcNAc...) asparagine glycan is linked to Asn-47. Residues 63–83 traverse the membrane as a helical segment; sequence SLAPLYFIYGPLLYFIKFFKL. An N-linked (GlcNAc...) asparagine glycan is attached at Asn-84. A run of 9 helical transmembrane segments spans residues 96 to 116, 140 to 160, 189 to 209, 222 to 242, 247 to 267, 282 to 302, 310 to 330, 332 to 348, and 350 to 370; these read LQIS…MLPS, LFSN…IDDL, LGIF…WFVM, LVMG…ILFG, VVAE…NLLY, YYTH…IFFV, TPFL…HQEL, FLIP…DFTL, and WVQP…SILM. Residues Asn-408 and Asn-473 are each glycosylated (N-linked (GlcNAc...) asparagine).

The protein belongs to the glycosyltransferase 22 family. PIGZ subfamily.

It localises to the endoplasmic reticulum membrane. It functions in the pathway glycolipid biosynthesis; glycosylphosphatidylinositol-anchor biosynthesis. Functionally, alpha-1,2-mannosyltransferase involved in glycosylphosphatidylinositol-anchor biosynthesis. Transfers a fourth mannose to trimannosyl-GPIs during GPI precursor assembly. The presence of a fourth mannose in GPI is essential in fungi. This chain is GPI mannosyltransferase 4 (SMP3), found in Candida albicans (strain SC5314 / ATCC MYA-2876) (Yeast).